The chain runs to 441 residues: Gluconate 2-dehydrogenase cytochrome c subunit (441 aa).

A signal peptide spans 1 to 19; it reads MMKSILALVLGTLSFAALA. Cytochrome c domains are found at residues 26 to 129, 173 to 289, and 312 to 403; these read ALVK…MHGV, PVLA…KSLG, and DDSQ…RGSW. 9 residues coordinate heme c: cysteine 40, cysteine 43, histidine 44, cysteine 188, cysteine 191, histidine 192, cysteine 325, cysteine 328, and histidine 329.

As to quaternary structure, heterotrimer. Requires FAD as cofactor. Post-translationally, binds 3 heme c groupd covalently per subunit.

It is found in the cell membrane. It carries out the reaction D-gluconate + A = 2-dehydro-D-gluconate + AH2. Its function is as follows. Part of the heterotrimer that catalyzes the conversion of D-gluconate to 2-dehydro-D-gluconate. The sequence is that of Gluconate 2-dehydrogenase cytochrome c subunit from Pantoea cypripedii (Pectobacterium cypripedii).